Reading from the N-terminus, the 522-residue chain is Transcription factor SPT20 homolog (522 aa).

At Ser-284 the chain carries Phosphoserine. 2 disordered regions span residues 361 to 380 (DEES…DHSN) and 408 to 522 (PVKM…RHES). Positions 412 to 425 (SHSSSGSASLSQVS) are enriched in low complexity. Residues 433 to 442 (TETVSVQSSV) show a composition bias toward polar residues. Residues 458–467 (SSSGNSSSGN) show a composition bias toward low complexity. Pro residues predominate over residues 481 to 492 (PTPPPSSKPPTI). At Thr-482 the chain carries Phosphothreonine. Residues 506–522 (LSPAALSPASSSQRHES) are compositionally biased toward low complexity. Phosphoserine occurs at positions 507 and 512.

The protein belongs to the SPT20 family. In terms of assembly, interacts with ATG9A. Interacts with MAPK14.

Its function is as follows. Required for MAP kinase p38 (MAPK11, MAPK12, MAPK13 and/or MAPK14) activation during gastrulation. Required for down-regulation of E-cadherin during gastrulation by regulating E-cadherin protein level downstream from NCK-interacting kinase (NIK) and independently of the regulation of transcription by FGF signaling and Snail. Required for starvation-induced ATG9A trafficking during autophagy. The chain is Transcription factor SPT20 homolog (SUPT20H) from Pongo abelii (Sumatran orangutan).